The sequence spans 510 residues: Probable mannosyl-oligosaccharide alpha-1,2-mannosidase 1B (510 aa).

The first 21 residues, 1–21 (MHFSSLSLPLTALSLVTPSLA), serve as a signal peptide directing secretion. N35, N95, N182, and N249 each carry an N-linked (GlcNAc...) asparagine glycan. An intrachain disulfide couples C332 to C361. N-linked (GlcNAc...) asparagine glycosylation occurs at N366. E375 serves as the catalytic Proton donor. Residue T501 coordinates Ca(2+).

Belongs to the glycosyl hydrolase 47 family. As to quaternary structure, monomer. Ca(2+) serves as cofactor. It depends on Mg(2+) as a cofactor.

Its subcellular location is the cytoplasmic vesicle lumen. The enzyme catalyses N(4)-(alpha-D-Man-(1-&gt;2)-alpha-D-Man-(1-&gt;2)-alpha-D-Man-(1-&gt;3)-[alpha-D-Man-(1-&gt;2)-alpha-D-Man-(1-&gt;3)-[alpha-D-Man-(1-&gt;2)-alpha-D-Man-(1-&gt;6)]-alpha-D-Man-(1-&gt;6)]-beta-D-Man-(1-&gt;4)-beta-D-GlcNAc-(1-&gt;4)-beta-D-GlcNAc)-L-asparaginyl-[protein] (N-glucan mannose isomer 9A1,2,3B1,2,3) + 4 H2O = N(4)-(alpha-D-Man-(1-&gt;3)-[alpha-D-Man-(1-&gt;3)-[alpha-D-Man-(1-&gt;6)]-alpha-D-Man-(1-&gt;6)]-beta-D-Man-(1-&gt;4)-beta-D-GlcNAc-(1-&gt;4)-beta-D-GlcNAc)-L-asparaginyl-[protein] (N-glucan mannose isomer 5A1,2) + 4 beta-D-mannose. It catalyses the reaction N(4)-(alpha-D-Man-(1-&gt;2)-alpha-D-Man-(1-&gt;2)-alpha-D-Man-(1-&gt;3)-[alpha-D-Man-(1-&gt;3)-[alpha-D-Man-(1-&gt;2)-alpha-D-Man-(1-&gt;6)]-alpha-D-Man-(1-&gt;6)]-beta-D-Man-(1-&gt;4)-beta-D-GlcNAc-(1-&gt;4)-beta-D-GlcNAc)-L-asparaginyl-[protein] (N-glucan mannose isomer 8A1,2,3B1,3) + 3 H2O = N(4)-(alpha-D-Man-(1-&gt;3)-[alpha-D-Man-(1-&gt;3)-[alpha-D-Man-(1-&gt;6)]-alpha-D-Man-(1-&gt;6)]-beta-D-Man-(1-&gt;4)-beta-D-GlcNAc-(1-&gt;4)-beta-D-GlcNAc)-L-asparaginyl-[protein] (N-glucan mannose isomer 5A1,2) + 3 beta-D-mannose. It functions in the pathway protein modification; protein glycosylation. Its function is as follows. Involved in the maturation of Asn-linked oligosaccharides. Progressively trims alpha-1,2-linked mannose residues from Man(9)GlcNAc(2) to produce Man(5)GlcNAc(2). The protein is Probable mannosyl-oligosaccharide alpha-1,2-mannosidase 1B (mns1B) of Aspergillus flavus (strain ATCC 200026 / FGSC A1120 / IAM 13836 / NRRL 3357 / JCM 12722 / SRRC 167).